The following is a 117-amino-acid chain: G antigen 5 (117 aa).

The disordered stretch occupies residues 1–117 (MSWRGRSTYY…PEEGEKQSQC (117 aa)). Composition is skewed to acidic residues over residues 32-45 (FSDE…EEGE) and 87-96 (ECEDGPDGQE). The span at 103 to 117 (EEVKTPEEGEKQSQC) shows a compositional bias: basic and acidic residues.

It belongs to the GAGE family. In terms of tissue distribution, expressed in a variety of tumor tissues but not in normal tissues, except testis.

The chain is G antigen 5 (GAGE5) from Homo sapiens (Human).